Reading from the N-terminus, the 429-residue chain is MNYMSVSFTHKNTDIIVREKLSFANDVKKREILKLICSNKAIKECLVLSTCNRVEVLAYIDDFNYTSDYVIKAISKLSGVDFDELKERADIYEDDGAIHHLFSVASSLDSLVVGETQIVGQLKDAYNFAKNERKSGVMLDLAINSALKCAAVIRSKTDISKNPISVASVAVCMAREKIGDLGGTTAVVVGAGEMAELACKHLITHKAKVIIINRNIDHAKKLAESLGENASIAEFSNLGEFINKYALIFSATGANKPIITDLLAKPQNFKRYFFDIAVPRDIDITCDDLSEVYAVDDLEEIVRKNLLLREEQAQIAYSIVGRETTKFYKDLKTLSSTPIIKALRNSAKKVAETELKKAIKRGYLRHSDIDEARKLIHQVFKAFLHTPTVNLKNLDENAQNDINAIAEIFGIEEDFDKFCENSLENKNEI.

Residues 50 to 53 (TCNR), Ser-110, 115 to 117 (ETQ), and Gln-121 contribute to the substrate site. Cys-51 acts as the Nucleophile in catalysis. Position 190–195 (190–195 (GAGEMA)) interacts with NADP(+).

It belongs to the glutamyl-tRNA reductase family. As to quaternary structure, homodimer.

The enzyme catalyses (S)-4-amino-5-oxopentanoate + tRNA(Glu) + NADP(+) = L-glutamyl-tRNA(Glu) + NADPH + H(+). It participates in porphyrin-containing compound metabolism; protoporphyrin-IX biosynthesis; 5-aminolevulinate from L-glutamyl-tRNA(Glu): step 1/2. Its function is as follows. Catalyzes the NADPH-dependent reduction of glutamyl-tRNA(Glu) to glutamate 1-semialdehyde (GSA). This chain is Glutamyl-tRNA reductase, found in Campylobacter hominis (strain ATCC BAA-381 / DSM 21671 / CCUG 45161 / LMG 19568 / NCTC 13146 / CH001A).